The sequence spans 272 residues: MTREIVIGGVKIGAKRPLALVAGPCVIESELATMRQAERLMTICNALSLPLIFKASYDKANRTSIGAYRGPGMREGLRILRKVKESLGLAVLSDVHSIEQVAPAAEVLDVLQIPAFLCRQTDLLIAAAATGRVINVKKGQFLAPWDMKNVAAKIASSGNENIILTERGASFGYNNLVVDMRSFPVMRASGYPVIFDATHSVQLPGGQGESSGGQREFVEFLSRAAVAAGVDGIFMEVHEEPEKALCDGPNSIALNDLPALLATLKAIDAVVK.

Belongs to the KdsA family.

It localises to the cytoplasm. It catalyses the reaction D-arabinose 5-phosphate + phosphoenolpyruvate + H2O = 3-deoxy-alpha-D-manno-2-octulosonate-8-phosphate + phosphate. It participates in carbohydrate biosynthesis; 3-deoxy-D-manno-octulosonate biosynthesis; 3-deoxy-D-manno-octulosonate from D-ribulose 5-phosphate: step 2/3. Its pathway is bacterial outer membrane biogenesis; lipopolysaccharide biosynthesis. The sequence is that of 2-dehydro-3-deoxyphosphooctonate aldolase from Pelobacter propionicus (strain DSM 2379 / NBRC 103807 / OttBd1).